A 348-amino-acid chain; its full sequence is Holliday junction branch migration complex subunit RuvB (348 aa).

The large ATPase domain (RuvB-L) stretch occupies residues 1–181 (MEERMITPQQ…FGVISRLEFY (181 aa)). The ATP site is built by Leu20, Arg21, Gly62, Lys65, Thr66, Thr67, Arg171, Tyr181, and Arg218. Thr66 contributes to the Mg(2+) binding site. The small ATPAse domain (RuvB-S) stretch occupies residues 182–252 (EVEDLIRIIT…LAGKSLDRLE (71 aa)). Residues 255 to 348 (PAGLDRIDQK…GDSLFDAAED (94 aa)) form a head domain (RuvB-H) region. DNA contacts are provided by Arg310 and Arg315. Positions 329-348 (VNSSHQEGGQGDSLFDAAED) are disordered.

This sequence belongs to the RuvB family. Homohexamer. Forms an RuvA(8)-RuvB(12)-Holliday junction (HJ) complex. HJ DNA is sandwiched between 2 RuvA tetramers; dsDNA enters through RuvA and exits via RuvB. An RuvB hexamer assembles on each DNA strand where it exits the tetramer. Each RuvB hexamer is contacted by two RuvA subunits (via domain III) on 2 adjacent RuvB subunits; this complex drives branch migration. In the full resolvosome a probable DNA-RuvA(4)-RuvB(12)-RuvC(2) complex forms which resolves the HJ.

It is found in the cytoplasm. It catalyses the reaction ATP + H2O = ADP + phosphate + H(+). Its function is as follows. The RuvA-RuvB-RuvC complex processes Holliday junction (HJ) DNA during genetic recombination and DNA repair, while the RuvA-RuvB complex plays an important role in the rescue of blocked DNA replication forks via replication fork reversal (RFR). RuvA specifically binds to HJ cruciform DNA, conferring on it an open structure. The RuvB hexamer acts as an ATP-dependent pump, pulling dsDNA into and through the RuvAB complex. RuvB forms 2 homohexamers on either side of HJ DNA bound by 1 or 2 RuvA tetramers; 4 subunits per hexamer contact DNA at a time. Coordinated motions by a converter formed by DNA-disengaged RuvB subunits stimulates ATP hydrolysis and nucleotide exchange. Immobilization of the converter enables RuvB to convert the ATP-contained energy into a lever motion, pulling 2 nucleotides of DNA out of the RuvA tetramer per ATP hydrolyzed, thus driving DNA branch migration. The RuvB motors rotate together with the DNA substrate, which together with the progressing nucleotide cycle form the mechanistic basis for DNA recombination by continuous HJ branch migration. Branch migration allows RuvC to scan DNA until it finds its consensus sequence, where it cleaves and resolves cruciform DNA. In Desulfitobacterium hafniense (strain DSM 10664 / DCB-2), this protein is Holliday junction branch migration complex subunit RuvB.